Consider the following 294-residue polypeptide: NAD kinase (294 aa).

Asp-73 (proton acceptor) is an active-site residue. NAD(+) contacts are provided by residues 73–74 (DG), 147–148 (ND), Arg-175, Asp-177, and 188–193 (TAYALS).

Belongs to the NAD kinase family. A divalent metal cation serves as cofactor.

It localises to the cytoplasm. The catalysed reaction is NAD(+) + ATP = ADP + NADP(+) + H(+). Involved in the regulation of the intracellular balance of NAD and NADP, and is a key enzyme in the biosynthesis of NADP. Catalyzes specifically the phosphorylation on 2'-hydroxyl of the adenosine moiety of NAD to yield NADP. This Nitrosospira multiformis (strain ATCC 25196 / NCIMB 11849 / C 71) protein is NAD kinase.